The primary structure comprises 356 residues: Methionine import ATP-binding protein MetN 1 (356 aa).

Positions 2-241 (IELKNISVTF…PQQPLTKDFI (240 aa)) constitute an ABC transporter domain. An ATP-binding site is contributed by 38–45 (GYSGAGKS).

It belongs to the ABC transporter superfamily. Methionine importer (TC 3.A.1.24) family. In terms of assembly, the complex is composed of two ATP-binding proteins (MetN), two transmembrane proteins (MetI) and a solute-binding protein (MetQ).

Its subcellular location is the cell membrane. The enzyme catalyses L-methionine(out) + ATP + H2O = L-methionine(in) + ADP + phosphate + H(+). The catalysed reaction is D-methionine(out) + ATP + H2O = D-methionine(in) + ADP + phosphate + H(+). Its function is as follows. Part of the ABC transporter complex MetNIQ involved in methionine import. Responsible for energy coupling to the transport system. The polypeptide is Methionine import ATP-binding protein MetN 1 (Enterococcus faecalis (strain ATCC 700802 / V583)).